The sequence spans 293 residues: Ribosomal protein L11 methyltransferase (293 aa).

S-adenosyl-L-methionine contacts are provided by threonine 145, glycine 166, aspartate 188, and asparagine 230.

The protein belongs to the methyltransferase superfamily. PrmA family.

It localises to the cytoplasm. The catalysed reaction is L-lysyl-[protein] + 3 S-adenosyl-L-methionine = N(6),N(6),N(6)-trimethyl-L-lysyl-[protein] + 3 S-adenosyl-L-homocysteine + 3 H(+). Methylates ribosomal protein L11. The chain is Ribosomal protein L11 methyltransferase from Shewanella pealeana (strain ATCC 700345 / ANG-SQ1).